The sequence spans 358 residues: MSSFTSKFADELIANAAYIGTPGKGILAADESTGTIGKRLASINVENVESNRRALRELLFTTPGALPCLSGVILFEETLYQKSSDGTPFVDMLKSAGVLPGIKVDKGTVELAGTNGETTTQGLDGLGDRCKKYYEAGARFAKWRAVLKIGVNEPSQLAIHENAYGLARYAVICQENGLVPIVEPEILVDGSHDIQKCAAVTERVLAACYKALSDHHVLLEGTLLKPNMVTPGSESAKVAPEVIAEHTVRALQRTVPAAVPAIVFLSGGQSEEEATRNLNAMNQLKTKKPWSLSFSFGRALQQSTLKTWGGKEENVKKAQEAFLVRCKANSEATLGAYKGDAKLGEGAAESLHVKDYKY.

Ser-2 carries the post-translational modification N-acetylserine. Residue Arg-39 coordinates substrate. Cys-68 is modified (S-glutathionyl cysteine; transient). Cys-173 is modified (S-glutathionyl cysteine; transient; alternate). Residue Cys-173 is modified to S-nitrosocysteine; transient; alternate. The active-site Proton acceptor is Glu-183. Lys-225 (schiff-base intermediate with dihydroxyacetone-P) is an active-site residue. Substrate-binding positions include 266–268 and Arg-298; that span reads SGG. Ser-350 is subject to Phosphoserine. Lys-354 carries the N6,N6,N6-trimethyllysine modification.

The protein belongs to the class I fructose-bisphosphate aldolase family. In terms of assembly, homotetramer. Interacts with TRX1 and TRX3. Interacts with GAPC1 and VDAC3. S-glutathionylated at Cys-68 and Cys-173. In terms of processing, S-nitrosylated at Cys-173. In terms of tissue distribution, expressed in roots, rosettes leaves, cauline leaves, stems and flowers.

It is found in the cytoplasm. It localises to the cytosol. Its subcellular location is the nucleus. The protein resides in the mitochondrion. It carries out the reaction beta-D-fructose 1,6-bisphosphate = D-glyceraldehyde 3-phosphate + dihydroxyacetone phosphate. Its pathway is carbohydrate degradation; glycolysis; D-glyceraldehyde 3-phosphate and glycerone phosphate from D-glucose: step 4/4. Its activity is regulated as follows. Total and irreversible inhibition by S-nitrosoglutathione (GSNO). Partial and reversible inhibition by oxidized glutathione (GSSG). Functionally, fructose-bisphosphate aldolase that plays a key role in glycolysis and gluconeogenesis. Associates with GAPC1 to the outer mitochondrial membrane, in a redox-dependent manner, leading to binding and bundling of actin. Actin binding and bundling occurs under oxidizing conditions and is reversible under reducing conditions. May be part of a redox-dependent retrograde signal transduction network for adaptation upon oxidative stress. This chain is Fructose-bisphosphate aldolase 6, cytosolic, found in Arabidopsis thaliana (Mouse-ear cress).